A 418-amino-acid polypeptide reads, in one-letter code: Light-independent protochlorophyllide reductase subunit N (418 aa).

Cysteine 17, cysteine 42, and cysteine 103 together coordinate [4Fe-4S] cluster.

It belongs to the BchN/ChlN family. In terms of assembly, protochlorophyllide reductase is composed of three subunits; ChlL, ChlN and ChlB. Forms a heterotetramer of two ChlB and two ChlN subunits. [4Fe-4S] cluster serves as cofactor.

It carries out the reaction chlorophyllide a + oxidized 2[4Fe-4S]-[ferredoxin] + 2 ADP + 2 phosphate = protochlorophyllide a + reduced 2[4Fe-4S]-[ferredoxin] + 2 ATP + 2 H2O. It functions in the pathway porphyrin-containing compound metabolism; chlorophyll biosynthesis (light-independent). In terms of biological role, component of the dark-operative protochlorophyllide reductase (DPOR) that uses Mg-ATP and reduced ferredoxin to reduce ring D of protochlorophyllide (Pchlide) to form chlorophyllide a (Chlide). This reaction is light-independent. The NB-protein (ChlN-ChlB) is the catalytic component of the complex. This is Light-independent protochlorophyllide reductase subunit N from Prochlorococcus marinus (strain NATL2A).